The following is a 583-amino-acid chain: Epsin-2 (583 aa).

A 1,2-diacyl-sn-glycero-3-phospho-(1D-myo-inositol-4,5-bisphosphate) contacts are provided by Arg-8, Lys-11, Arg-25, Asn-30, Arg-63, and His-73. An ENTH domain is found at 12 to 144; that stretch reads NIVNSYSEAE…KDEERLKVER (133 aa). The segment covering 165-181 has biased composition (polar residues); it reads QITFGRGSSQPNLSISH. The disordered stretch occupies residues 165–217; the sequence is QITFGRGSSQPNLSISHSEQEYGKAGGSPASYHGSTSPRVSSELEQARPQTSG. Arg-170 carries the post-translational modification Omega-N-methylarginine. A phosphoserine mark is found at Ser-173, Ser-192, and Ser-195. The span at 197-216 shows a compositional bias: polar residues; sequence HGSTSPRVSSELEQARPQTS. UIM domains lie at 218–237 and 243–262; these read EEEL…AEQE and GDDL…TVKV. Disordered regions lie at residues 293-384 and 411-457; these read SGPV…KPSP and TSKK…PESF. 4 repeat units span residues 301-303, 313-315, 326-328, and 340-342. The span at 301-315 shows a compositional bias: polar residues; sequence EPWSTGTPANQTNPW. Residues 301–377 are 6 X 3 AA repeats of [DE]-P-W; sequence EPWSTGTPAN…SDAGKTADAW (77 aa). Over residues 346–355 the composition is skewed to polar residues; it reads TTASIQSVPK. Repeat copies occupy residues 358-360 and 375-377. Residue Ser-431 is modified to Phosphoserine. The segment covering 437–448 has biased composition (low complexity); it reads SQSLTSASSKPS. The residue at position 453 (Thr-453) is a Phosphothreonine. 2 consecutive repeat copies span residues 482–484 and 496–498. Residues 482–581 form a 3 X 3 AA repeats of N-P-F region; the sequence is NPFLAPGAAA…AQPAGTTNPF (100 aa). Ser-514 is modified (phosphoserine). Copy 3 of the repeat occupies 579 to 581; the sequence is NPF.

The protein belongs to the epsin family. In terms of assembly, binds AP-2 and clathrin. Interacts with ITSN1. Interacts with UBQLN2. Binds EPS15. Post-translationally, ubiquitinated. In terms of tissue distribution, highly expressed in brain. Detected at lower levels in lung, liver, muscle and testis.

It is found in the cytoplasm. Functionally, plays a role in the formation of clathrin-coated invaginations and endocytosis. In Rattus norvegicus (Rat), this protein is Epsin-2 (Epn2).